Reading from the N-terminus, the 231-residue chain is MFKIMLIEDDHTLFSEIKERLSQWSYDVFGVSNFEKVIEEFTSLKPDLVIIDIQLPKFDGFHWCRMIRQHSNVPIIFLSSRDHPTDMVMSMQLGADDFIQKPFHFDVLVAKIQAILRRVHNYTSEQTQLKTWCGATIDYESNTVSNHVGSIELSKNEFFILKRLIERKNKIVTRDDLIRSLWEDERFISDNTLTVNVNRLRKRLDELGLGAYIETKVGQGYMAKEDGNTHD.

The Response regulatory domain maps to 3 to 116 (KIMLIEDDHT…VLVAKIQAIL (114 aa)). Aspartate 52 carries the post-translational modification 4-aspartylphosphate. The ompR/PhoB-type DNA-binding region spans 127–225 (TQLKTWCGAT…KVGQGYMAKE (99 aa)).

Phosphorylated by BceS.

It is found in the cytoplasm. Functionally, member of the two-component regulatory system BceS/BceR involved in the regulation of bacitracin resistance. When activated by BceS, binds to the upstream region of the bceAB promoter and up-regulates the expression of these two genes. In Halalkalibacterium halodurans (strain ATCC BAA-125 / DSM 18197 / FERM 7344 / JCM 9153 / C-125) (Bacillus halodurans), this protein is Sensory transduction protein BceR (bceR).